A 491-amino-acid polypeptide reads, in one-letter code: Probable cytosol aminopeptidase (491 aa).

Mn(2+) is bound by residues Lys-261 and Asp-266. The active site involves Lys-273. Residues Asp-284, Asp-343, and Glu-345 each coordinate Mn(2+). The active site involves Arg-347.

Belongs to the peptidase M17 family. Mn(2+) serves as cofactor.

It localises to the cytoplasm. The catalysed reaction is Release of an N-terminal amino acid, Xaa-|-Yaa-, in which Xaa is preferably Leu, but may be other amino acids including Pro although not Arg or Lys, and Yaa may be Pro. Amino acid amides and methyl esters are also readily hydrolyzed, but rates on arylamides are exceedingly low.. The enzyme catalyses Release of an N-terminal amino acid, preferentially leucine, but not glutamic or aspartic acids.. Functionally, presumably involved in the processing and regular turnover of intracellular proteins. Catalyzes the removal of unsubstituted N-terminal amino acids from various peptides. The protein is Probable cytosol aminopeptidase of Geobacter sp. (strain M21).